Consider the following 121-residue polypeptide: Large ribosomal subunit protein bL19 (121 aa).

This sequence belongs to the bacterial ribosomal protein bL19 family.

In terms of biological role, this protein is located at the 30S-50S ribosomal subunit interface and may play a role in the structure and function of the aminoacyl-tRNA binding site. In Chlorobium phaeovibrioides (strain DSM 265 / 1930) (Prosthecochloris vibrioformis (strain DSM 265)), this protein is Large ribosomal subunit protein bL19.